The sequence spans 99 residues: Small ribosomal subunit protein eS24 (99 aa).

This sequence belongs to the eukaryotic ribosomal protein eS24 family. May be present in 2 copies per 70S ribosome. Part of the 30S ribosomal subunit, where it binds 16S rRNA at its canonical site at the bse of the body, as well as a possible second 50S binding site near 23S rRNA helix 45.

The polypeptide is Small ribosomal subunit protein eS24 (Pyrococcus furiosus (strain ATCC 43587 / DSM 3638 / JCM 8422 / Vc1)).